The following is a 204-amino-acid chain: Putative AgrB-like protein (204 aa).

Helical transmembrane passes span 52-74 (YGIA…YLWL), 87-107 (LNCT…FQNI), 111-131 (NWIV…FAPA), and 156-176 (LILT…LIMV).

This sequence belongs to the AgrB family.

It is found in the cell membrane. In terms of biological role, may be involved in the proteolytic processing of a quorum sensing system signal molecule precursor. In Listeria monocytogenes serotype 4b (strain CLIP80459), this protein is Putative AgrB-like protein.